Reading from the N-terminus, the 159-residue chain is SsrA-binding protein (159 aa).

The protein belongs to the SmpB family.

The protein localises to the cytoplasm. In terms of biological role, required for rescue of stalled ribosomes mediated by trans-translation. Binds to transfer-messenger RNA (tmRNA), required for stable association of tmRNA with ribosomes. tmRNA and SmpB together mimic tRNA shape, replacing the anticodon stem-loop with SmpB. tmRNA is encoded by the ssrA gene; the 2 termini fold to resemble tRNA(Ala) and it encodes a 'tag peptide', a short internal open reading frame. During trans-translation Ala-aminoacylated tmRNA acts like a tRNA, entering the A-site of stalled ribosomes, displacing the stalled mRNA. The ribosome then switches to translate the ORF on the tmRNA; the nascent peptide is terminated with the 'tag peptide' encoded by the tmRNA and targeted for degradation. The ribosome is freed to recommence translation, which seems to be the essential function of trans-translation. The chain is SsrA-binding protein from Bifidobacterium adolescentis (strain ATCC 15703 / DSM 20083 / NCTC 11814 / E194a).